The chain runs to 84 residues: Putative glutaredoxin MT3292 (84 aa).

Positions 1–84 constitute a Glutaredoxin domain; the sequence is MITAALTIYT…VKAKLVKIAG (84 aa).

The polypeptide is Putative glutaredoxin MT3292 (Mycobacterium tuberculosis (strain CDC 1551 / Oshkosh)).